A 218-amino-acid chain; its full sequence is Guanylate kinase (218 aa).

In terms of domain architecture, Guanylate kinase-like spans 5–188; sequence GNLFILSAPS…ALLDLTTIVN (184 aa). 12-19 serves as a coordination point for ATP; sequence APSGAGKS.

The protein belongs to the guanylate kinase family.

Its subcellular location is the cytoplasm. The catalysed reaction is GMP + ATP = GDP + ADP. Its function is as follows. Essential for recycling GMP and indirectly, cGMP. This Colwellia psychrerythraea (strain 34H / ATCC BAA-681) (Vibrio psychroerythus) protein is Guanylate kinase.